The primary structure comprises 46 residues: Diuretic hormone (46 aa).

Isoleucine amide is present on I46.

It belongs to the sauvagine/corticotropin-releasing factor/urotensin I family.

Its subcellular location is the secreted. Its function is as follows. Regulation of fluid secretion. Stimulates primary urine secretion by Malpighian tubules and causes a dose-dependent stimulation of cAMP levels in the tubules. The polypeptide is Diuretic hormone (Periplaneta americana (American cockroach)).